The following is an 836-amino-acid chain: Protein AKNAD1 (836 aa).

3 stretches are compositionally biased toward polar residues: residues 159-172 (SWPKEQTPELTDQL), 181-192 (SNKPGSATTTEE), and 227-248 (SYQGQSPQKQQTEKANSGNTFK). Disordered regions lie at residues 159-248 (SWPK…NTFK) and 303-325 (LETTPESNCVEKQHQEQKGKITE). The segment covering 311 to 323 (CVEKQHQEQKGKI) has biased composition (basic and acidic residues). The stretch at 372 to 484 (QKISQGKQMC…DVKEKMDESK (113 aa)) forms a coiled coil. Disordered regions lie at residues 510–545 (SNEIPKEHPGHPSGPRGSGGSEVTGTPQGGPQEAPN) and 575–596 (MRLSSNSGEDPNGTPRRQDCAE).

The protein belongs to the AKNA family.

In Homo sapiens (Human), this protein is Protein AKNAD1 (AKNAD1).